Reading from the N-terminus, the 323-residue chain is Cobalamin biosynthesis protein CobD (323 aa).

5 helical membrane-spanning segments follow: residues 52–72 (IAGVLLLALTVTSAASVTWLM), 73–93 (VWGSARLHALAGLMVAALLSS), 154–174 (DGIIAPLFWLALGGPVAGMAF), 214–234 (ALLMVMVAPLIGLSQANAASI), and 294–314 (IRLMYATTLAMAVISLATAAL).

The protein belongs to the CobD/CbiB family.

The protein resides in the cell membrane. It functions in the pathway cofactor biosynthesis; adenosylcobalamin biosynthesis. Converts cobyric acid to cobinamide by the addition of aminopropanol on the F carboxylic group. This Pelobacter propionicus (strain DSM 2379 / NBRC 103807 / OttBd1) protein is Cobalamin biosynthesis protein CobD.